We begin with the raw amino-acid sequence, 690 residues long: MLYASQRGRLTENLRNALQQDSTTQGCLGAETPSIMYTGAKSDRWAHPLVGTIHASNLYCPMLRAYCRHYGPRPVFVASDESLPMFGASPALHTPVQVQMCLLPELRDTLQRLLPPPNLEDSEALTEFKTSVSSARAILEDPNFLEMREFVTSLASFLSGQYKHKPARLEAFQKQVVLHSFYFLISIKSLEITDTMFDIFQSAFGLEEMTLEKLHIFKQKASVFLIPRRHGKTWIVVAIISLILSNLSNVQIGYVAHQKHVASAVFTEIIDTLTKSFDSKRVEVNKETSTITFRHSGKISSTVMCATCFNKNSIRGQTFHLLFVDEANFIKKEALPAILGFMLQKDAKIIFISSVNSADQATSFLYKLKDAQERLLNVVSYVCQEHRQDFDMQDSMVSCPCFRLHIPSYITMDSNIRATTNLFLDGAFSTELMGDTSSLSQGSLSRTVRDDAINQLELCRVDTLNPRVAGRLASSLYVYVDPAYTNNTSASGTGIAAVTHDRADPNRVIVLGLEHFFLKDLTGDAALQIATCVVALVSSIVTLHPHLEEVKVAVEGNSSQDSAVAIASIIGESCPLPCAFVHTKDKTSSLQWPMYLLTNEKSKAFERLIYAVNTASLSASQVTVSNTIQLSFDPVLYLISQIRAIKPIPLRDGTYTYTGKQRNLSDDVLVALVMAHFLATTQKHTFKKVH.

The short motif at 226 to 233 (IPRRHGKT) is the Walker A motif element. Positions 321–326 (LLFVDE) match the Walker B motif motif. Glu326 functions as the For ATPase activity in the catalytic mechanism. Active-site for nuclease activity residues include Asp481, Glu555, and Asp667.

It belongs to the herpesviridae TRM3 protein family. Interacts with the terminase subunits TRM1 and TRM2. Interacts with portal protein.

The protein localises to the host nucleus. Component of the molecular motor that translocates viral genomic DNA in empty capsid during DNA packaging. Forms a tripartite terminase complex together with TRM1 and TRM2 in the host cytoplasm. Once the complex reaches the host nucleus, it interacts with the capsid portal vertex. This portal forms a ring in which genomic DNA is translocated into the capsid. TRM3 carries an RNase H-like nuclease activity that plays an important role for the cleavage of concatemeric viral DNA into unit length genomes. The sequence is that of Tripartite terminase subunit 3 from Homo sapiens (Human).